The chain runs to 433 residues: FAD-dependent monooxygenase notI' (433 aa).

FAD is bound by residues Glu45 and Arg117. Arg195 is an active-site residue. FAD-binding residues include Asp314 and Ala327.

The protein belongs to the paxM FAD-dependent monooxygenase family. It depends on FAD as a cofactor.

It functions in the pathway alkaloid biosynthesis. Its function is as follows. FAD-dependent monooxygenase; part of the gene cluster that mediates the biosynthesis of notoamide, a fungal indole alkaloid that belongs to a family of natural products containing a characteristic bicyclo[2.2.2]diazaoctane core. The first step of notoamide biosynthesis involves coupling of L-proline and L-tryptophan by the bimodular NRPS notE', to produce cyclo-L-tryptophan-L-proline called brevianamide F. The reverse prenyltransferase notF' then acts as a deoxybrevianamide E synthase and converts brevianamide F to deoxybrevianamide E via reverse prenylation at C-2 of the indole ring leading to the bicyclo[2.2.2]diazaoctane core. Deoxybrevianamide E is further hydroxylated at C-6 of the indole ring, likely catalyzed by the cytochrome P450 monooxygenase notG', to yield 6-hydroxy-deoxybrevianamide E. 6-hydroxy-deoxybrevianamide E is a specific substrate of the prenyltransferase notC' for normal prenylation at C-7 to produce 6-hydroxy-7-prenyl-deoxybrevianamide, also called notoamide S. As the proposed pivotal branching point in notoamide biosynthesis, notoamide S can be diverted to notoamide E through an oxidative pyran ring closure putatively catalyzed by either notH' cytochrome P450 monooxygenase or the notD' FAD-linked oxidoreductase. This step would be followed by an indole 2,3-epoxidation-initiated pinacol-like rearrangement catalyzed by the notB' FAD-dependent monooxygenase leading to the formation of notoamide C and notoamide D. On the other hand notoamide S is converted to notoamide T by notH' (or notD'), a bifunctional oxidase that also functions as the intramolecular Diels-Alderase responsible for generation of (-)-notoamide T. To generate antipodal (+)-notoaminide T, notH (or notD) in Aspergillus strain MF297-2 is expected to catalyze a Diels-Alder reaction leading to the opposite stereochemistry. The remaining oxidoreductase notD' (or notH') likely catalyzes the oxidative pyran ring formation to yield (-)-stephacidin A. The FAD-dependent monooxygenase notI' is highly similar to notB' and is predicted to catalyze a similar conversion from (-)-stephacidin A to (+)-notoamide B via the 2,3-epoxidation of (-)-stephacidin A followed by a pinacol-type rearrangement. Finally, it remains unclear which enzyme could be responsible for the final hydroxylation steps leading to notoamide A and sclerotiamide. The protein is FAD-dependent monooxygenase notI' of Aspergillus versicolor.